The sequence spans 306 residues: Nucleotide-binding protein amb4396 (306 aa).

Residues 1-14 (MSDLHSSPTDQTSA) show a composition bias toward polar residues. Residues 1-20 (MSDLHSSPTDQTSAPAHAGG) are disordered. 29-36 (GMSGAGKT) is a binding site for ATP. 77–80 (DIRT) contacts GTP.

This sequence belongs to the RapZ-like family.

Displays ATPase and GTPase activities. This Paramagnetospirillum magneticum (strain ATCC 700264 / AMB-1) (Magnetospirillum magneticum) protein is Nucleotide-binding protein amb4396.